A 426-amino-acid chain; its full sequence is Putative acid phosphatase 1 (426 aa).

Positions 1 to 18 (MRVLFYVFPFVIFALSQA) are cleaved as a signal peptide. The Extracellular portion of the chain corresponds to 19 to 388 (QLISVHVIFR…HNWTMTTVSW (370 aa)). H29 (nucleophile) is an active-site residue. N-linked (GlcNAc...) asparagine glycans are attached at residues N37 and N145. A disulfide bond links C133 and C369. D276 functions as the Proton donor in the catalytic mechanism. Residue N380 is glycosylated (N-linked (GlcNAc...) asparagine). A helical membrane pass occupies residues 389–409 (ILIGISAFLLIILIIMSYLAV). Residues 410–426 (RYKNRSVVTIKKVCLEN) lie on the Cytoplasmic side of the membrane.

Belongs to the histidine acid phosphatase family.

It localises to the membrane. It catalyses the reaction a phosphate monoester + H2O = an alcohol + phosphate. The protein is Putative acid phosphatase 1 of Caenorhabditis briggsae.